Here is a 3038-residue protein sequence, read N- to C-terminus: Lovastatin nonaketide synthase, polyketide synthase component (3038 aa).

One can recognise a Ketosynthase family 3 (KS3) domain in the interval asparagine 8 to glutamate 447. Catalysis depends on for beta-ketoacyl synthase activity residues cysteine 181, histidine 320, and histidine 367. The malonyl-CoA:ACP transacylase (MAT) domain stretch occupies residues isoleucine 562 to arginine 889. Serine 656 serves as the catalytic For malonyltransferase activity. Residues alanine 695 to lysine 757 are lovC-binding. An N-terminal hotdog fold region spans residues histidine 953–valine 1089. The tract at residues histidine 953–proline 1263 is dehydratase (DH) domain. The PKS/mFAS DH domain occupies histidine 953–serine 1267. Residue histidine 985 is the Proton acceptor; for dehydratase activity of the active site. A C-terminal hotdog fold region spans residues glutamate 1107–serine 1267. The active-site Proton donor; for dehydratase activity is aspartate 1174. The interval leucine 1443–glutamine 1543 is methyltransferase (CMet) domain. The interval threonine 2139–alanine 2437 is ketoreductase (KR) domain. One can recognise a Carrier domain in the interval glutamine 2463–leucine 2538. Residue serine 2498 is modified to O-(pantetheine 4'-phosphoryl)serine. The segment at valine 2546–proline 2602 is disordered. The span at serine 2583–glutamate 2594 shows a compositional bias: acidic residues. Positions proline 2602–phenylalanine 2952 are inactive Condensation domain.

As to quaternary structure, homodimer. Each MAT domain from the lovB homodimer binds one lovC molecule to form the final active lovB-lovC megasynthase complex. Requires pantetheine 4'-phosphate as cofactor.

The catalysed reaction is holo-[lovastatin nonaketide synthase] + 9 malonyl-CoA + S-adenosyl-L-methionine + 11 NADPH + 19 H(+) = dihydromonacolin L-[lovastatin nonaketide synthase] + S-adenosyl-L-homocysteine + 9 CO2 + 11 NADP(+) + 9 CoA + 6 H2O. Its pathway is polyketide biosynthesis; lovastatin biosynthesis. Functionally, lovastatin nonaketide synthase; part of the gene cluster that mediates the biosynthesis of lovastatin (also known as mevinolin, mevacor or monacolin K), a hypolipidemic inhibitor of (3S)-hydroxymethylglutaryl-coenzyme A (HMG-CoA) reductase (HMGR). The first step in the biosynthesis of lovastatin is the production of dihydromonacolin L acid by the lovastatin nonaketide synthase lovB and the trans-acting enoyl reductase lovC (called the lovB-lovC megasynthase complex) via condensation of one acetyl-CoA unit and 8 malonyl-CoA units. The formation of the LovB/C complex is essential for the integrity of the catalytic chamber to the complete total synthesis of DML acid. Dihydromonacolin L acid is released from lovB by the thioesterase lovG. Next, dihydromonacolin L acid is oxidized by the dihydromonacolin L monooxygenase lovA twice to form monacolin J acid. The 2-methylbutyrate moiety of lovastatin is synthesized by the lovastatin diketide synthase lovF via condensation of one acetyl-CoA unit and one malonyl-CoA unit. Finally, the covalent attachment of this moiety to monacolin J acid is catalyzed by the transesterase lovD to yield lovastatin. LovD has broad substrate specificity and can also convert monacolin J to simvastatin using alpha-dimethylbutanoyl-S-methyl-3-mercaptopropionate (DMB-S-MMP) as the thioester acyl donor, and can also catalyze the reverse reaction and function as hydrolase in vitro. LovD has much higher activity with LovF-bound 2-methylbutanoate than with free diketide substrates. The chain is Lovastatin nonaketide synthase, polyketide synthase component from Aspergillus terreus.